The chain runs to 283 residues: Pantothenate synthetase (283 aa).

30–37 (MGFLHEGH) serves as a coordination point for ATP. His-37 (proton donor) is an active-site residue. Gln-61 lines the (R)-pantoate pocket. Gln-61 contributes to the beta-alanine binding site. 147–150 (GKKD) lines the ATP pocket. Position 153 (Gln-153) interacts with (R)-pantoate. Residues Val-176 and 184 to 187 (MSSR) each bind ATP.

Belongs to the pantothenate synthetase family. Homodimer.

The protein localises to the cytoplasm. The enzyme catalyses (R)-pantoate + beta-alanine + ATP = (R)-pantothenate + AMP + diphosphate + H(+). It participates in cofactor biosynthesis; (R)-pantothenate biosynthesis; (R)-pantothenate from (R)-pantoate and beta-alanine: step 1/1. Functionally, catalyzes the condensation of pantoate with beta-alanine in an ATP-dependent reaction via a pantoyl-adenylate intermediate. The sequence is that of Pantothenate synthetase from Trichlorobacter lovleyi (strain ATCC BAA-1151 / DSM 17278 / SZ) (Geobacter lovleyi).